An 808-amino-acid polypeptide reads, in one-letter code: Glutamate receptor 1.1 (808 aa).

The first 19 residues, 1–19 (MEILFSISILALLFSGVVA), serve as a signal peptide directing secretion. The Extracellular portion of the chain corresponds to 20–541 (APSDDDVFEE…MWTFFDPFEK (522 aa)). N-linked (GlcNAc...) asparagine glycosylation is found at asparagine 288, asparagine 339, and asparagine 504. The helical transmembrane segment at 542–562 (SLWLASGAFFVLTGIVVWLVE) threads the bilayer. Over 563–570 (RSVNPEFQ) the chain is Cytoplasmic. A helical transmembrane segment spans residues 571 to 591 (GSWGQQLSMMLWFGFSTIVFA). Residues 592-602 (HREKLQKMSSR) are Cytoplasmic-facing. The helical transmembrane segment at 603-623 (FLVIVWVFVVLILTSSYSANL) threads the bilayer. Residues 624-771 (TSTKTISRMQ…SKRFTFRELR (148 aa)) are Extracellular-facing. A helical transmembrane segment spans residues 772–792 (GLFIIAGAAHVLVLALHLFHT). Residues 793–808 (RQEVSRLCTKLQSFYK) are Cytoplasmic-facing.

The protein belongs to the glutamate-gated ion channel (TC 1.A.10.1) family. May form heteromers. In terms of tissue distribution, expressed predominantly in roots. First detected in the root-shoot junction, and later in lateral roots and at the margin of matures leaves.

The protein localises to the membrane. Its function is as follows. Glutamate-gated receptor that probably acts as a non-selective cation channel. Can transport sodium, potassium, and calcium ions. Functions as a carbon and nitrogen regulator and/or sensor that regulates carbon and nitrogen metabolism and distinct physiological process such as germination through the control of acid abscisic (ABA) biosynthesis. May be involved in light-signal transduction and calcium homeostasis via the regulation of calcium influx into cells. Seems required for the regulation of the abscisic acid (ABA) signaling pathway that modulates many aspects of plant physiology such as seed germination and response to drought (e.g. stomata opening). This Arabidopsis thaliana (Mouse-ear cress) protein is Glutamate receptor 1.1 (GLR1.1).